The sequence spans 221 residues: Abscisic acid receptor PYL1 (221 aa).

Over residues 1–11 (MANSESSSSPV) the composition is skewed to low complexity. The segment at 1–22 (MANSESSSSPVNEEENSQRIST) is disordered. Ala2 is modified (N-acetylalanine). Residues 50–206 (YQLGNGRCSS…NLQKLASITE (157 aa)) form an START-like region. Abscisate is bound by residues Lys86, 116–121 (ANTSRE), 143–149 (RLRNYKS), and Glu171. Positions 112–116 (SGLPA) match the Gate loop motif. Positions 142 to 144 (HRL) match the Latch loop motif.

It belongs to the PYR/PYL/RCAR abscisic acid intracellular receptor family. Homodimer. Binds ABA on one subunit only. Interacts with HAB1, ABI1 and ABI2, and possibly with other PP2Cs. Binds to CARs protein in an ABA-independent manner, both at the plasma membrane and in the nucleus. Interacts directly with CAR1 and CAR4.

The protein resides in the cytoplasm. The protein localises to the nucleus. It is found in the cell membrane. Functionally, receptor for abscisic acid (ABA) required for ABA-mediated responses such as stomatal closure and germination inhibition. Inhibits the activity of group-A protein phosphatases type 2C (PP2Cs) when activated by ABA. Can be activated by both (-)-ABA and (+)-ABA. This chain is Abscisic acid receptor PYL1 (PYL1), found in Arabidopsis thaliana (Mouse-ear cress).